Reading from the N-terminus, the 384-residue chain is 1-deoxy-D-xylulose 5-phosphate reductoisomerase (384 aa).

Threonine 10, glycine 11, serine 12, isoleucine 13, glycine 36, asparagine 38, and asparagine 122 together coordinate NADPH. Lysine 123 lines the 1-deoxy-D-xylulose 5-phosphate pocket. Glutamate 124 is a binding site for NADPH. Residue aspartate 148 participates in Mn(2+) binding. Serine 149, glutamate 150, serine 174, and histidine 197 together coordinate 1-deoxy-D-xylulose 5-phosphate. Residue glutamate 150 coordinates Mn(2+). Glycine 203 provides a ligand contact to NADPH. Residues serine 210, asparagine 215, lysine 216, and glutamate 219 each contribute to the 1-deoxy-D-xylulose 5-phosphate site. A Mn(2+)-binding site is contributed by glutamate 219.

The protein belongs to the DXR family. Mg(2+) is required as a cofactor. Mn(2+) serves as cofactor.

The enzyme catalyses 2-C-methyl-D-erythritol 4-phosphate + NADP(+) = 1-deoxy-D-xylulose 5-phosphate + NADPH + H(+). The protein operates within isoprenoid biosynthesis; isopentenyl diphosphate biosynthesis via DXP pathway; isopentenyl diphosphate from 1-deoxy-D-xylulose 5-phosphate: step 1/6. In terms of biological role, catalyzes the NADPH-dependent rearrangement and reduction of 1-deoxy-D-xylulose-5-phosphate (DXP) to 2-C-methyl-D-erythritol 4-phosphate (MEP). The polypeptide is 1-deoxy-D-xylulose 5-phosphate reductoisomerase (Geotalea daltonii (strain DSM 22248 / JCM 15807 / FRC-32) (Geobacter daltonii)).